Consider the following 24-residue polypeptide: Humanin-like 10 (24 aa).

This sequence belongs to the humanin family. Expressed in mature brain, thyroid gland and testis.

The protein resides in the secreted. It is found in the cytoplasm. In terms of biological role, plays a role as a neuroprotective and antiapoptotic factor. This chain is Humanin-like 10, found in Homo sapiens (Human).